The following is a 175-amino-acid chain: Large ribosomal subunit protein uL10 (175 aa).

Belongs to the universal ribosomal protein uL10 family. As to quaternary structure, part of the ribosomal stalk of the 50S ribosomal subunit. The N-terminus interacts with L11 and the large rRNA to form the base of the stalk. The C-terminus forms an elongated spine to which L12 dimers bind in a sequential fashion forming a multimeric L10(L12)X complex.

In terms of biological role, forms part of the ribosomal stalk, playing a central role in the interaction of the ribosome with GTP-bound translation factors. The chain is Large ribosomal subunit protein uL10 from Methylococcus capsulatus (strain ATCC 33009 / NCIMB 11132 / Bath).